A 447-amino-acid polypeptide reads, in one-letter code: Serine/threonine-protein kinase NLK2 (447 aa).

The 290-residue stretch at 60 to 349 folds into the Protein kinase domain; sequence PEPDRPIGYG…AKDALAHPYL (290 aa). ATP contacts are provided by residues 66–74 and Lys-89; that span reads IGYGAFGVV. Catalysis depends on Asp-186, which acts as the Proton acceptor.

This sequence belongs to the protein kinase superfamily. CMGC Ser/Thr protein kinase family. MAP kinase subfamily. As to quaternary structure, interacts with sox11, hmgxb4/hmg2l1, rnf138/narf, stat3.1 and mef2a. Mg(2+) serves as cofactor. As to expression, expressed widely in the ectoderm during early gastrula stage when neural induction is taking place. Expressed in the head region of neurula stage embryos. At the end of neurulation, expression becomes localized to the nervous system, and is restricted to the central nervous system, eye and head neural crest cells by the early tadpole stages.

The protein resides in the nucleus. It localises to the cytoplasm. The catalysed reaction is L-seryl-[protein] + ATP = O-phospho-L-seryl-[protein] + ADP + H(+). It catalyses the reaction L-threonyl-[protein] + ATP = O-phospho-L-threonyl-[protein] + ADP + H(+). Its activity is regulated as follows. Activated by tyrosine and threonine phosphorylation. In terms of biological role, negatively regulates Wnt/beta-catenin-signaling during development. Plays a role together with sox11 in neural induction during early embryogenesis. Involved in TGFbeta-mediated mesoderm induction in early embryos, acting downstream of map3k7/tak1 to phosphorylate stat3.1. Augments the rnf138/narf-directed ubiquitination and degradation of tcf/lef by enhancing the association of rnf138/narf and tcf/lef. Phosphorylates mef2a to play a role in anterior neural development, including eye formation. The sequence is that of Serine/threonine-protein kinase NLK2 (nlk.2) from Xenopus laevis (African clawed frog).